Reading from the N-terminus, the 337-residue chain is Glyceraldehyde-3-phosphate dehydrogenase (337 aa).

Residues Thr11–Ile12 and Gly110 contribute to the NAD(+) site. A D-glyceraldehyde 3-phosphate-binding site is contributed by Ser139–Asn141. Catalysis depends on Cys140, which acts as the Nucleophile. Residue Arg168 coordinates NAD(+). His194–Gly195 lines the D-glyceraldehyde 3-phosphate pocket. Position 301 (Gln301) interacts with NAD(+).

The protein belongs to the glyceraldehyde-3-phosphate dehydrogenase family. In terms of assembly, homotetramer.

Its subcellular location is the cytoplasm. It carries out the reaction D-glyceraldehyde 3-phosphate + phosphate + NADP(+) = (2R)-3-phospho-glyceroyl phosphate + NADPH + H(+). The catalysed reaction is D-glyceraldehyde 3-phosphate + phosphate + NAD(+) = (2R)-3-phospho-glyceroyl phosphate + NADH + H(+). The protein operates within carbohydrate degradation; glycolysis; pyruvate from D-glyceraldehyde 3-phosphate: step 1/5. This is Glyceraldehyde-3-phosphate dehydrogenase (gap) from Methanothermobacter thermautotrophicus (strain ATCC 29096 / DSM 1053 / JCM 10044 / NBRC 100330 / Delta H) (Methanobacterium thermoautotrophicum).